The primary structure comprises 351 residues: Autoinducer 2 import system permease protein LsrC (351 aa).

Transmembrane regions (helical) follow at residues 14-34, 39-59, 70-90, 93-113, 115-135, 155-175, 213-233, 252-272, and 284-304; these read LLAILTLFALLGIIDRNYFSL, MIFSSAQILILLAIGATLVML, ITGLCAVTVGMALNAGFGLVA, LFALLVGMVAGFFNGILVTWL, IPAIVATLGTLGLYRGLMLLL, ILFSISPIGWLTMLLILSMAW, MNGVMAALAGIVFASQIGFIP, GISLLGGTGTIIGAILGAFLL, and LPAWWNDFIAGLVLLGVLVFD.

It belongs to the binding-protein-dependent transport system permease family. AraH/RbsC subfamily. In terms of assembly, the complex is composed of two ATP-binding proteins (LsrA), two transmembrane proteins (LsrC and LsrD) and a solute-binding protein (LsrB).

It localises to the cell inner membrane. Functionally, part of the ABC transporter complex LsrABCD involved in autoinducer 2 (AI-2) import. Probably responsible for the translocation of the substrate across the membrane. This chain is Autoinducer 2 import system permease protein LsrC (lsrC), found in Yersinia pseudotuberculosis serotype IB (strain PB1/+).